A 157-amino-acid polypeptide reads, in one-letter code: Protein-export protein SecB (157 aa).

This sequence belongs to the SecB family. As to quaternary structure, homotetramer, a dimer of dimers. One homotetramer interacts with 1 SecA dimer.

Its subcellular location is the cytoplasm. In terms of biological role, one of the proteins required for the normal export of preproteins out of the cell cytoplasm. It is a molecular chaperone that binds to a subset of precursor proteins, maintaining them in a translocation-competent state. It also specifically binds to its receptor SecA. The polypeptide is Protein-export protein SecB (Tolumonas auensis (strain DSM 9187 / NBRC 110442 / TA 4)).